The sequence spans 485 residues: Transcription factor E2FA (485 aa).

Residues 1–11 are compositionally biased toward low complexity; that stretch reads MSGVVRSSPGS. Disordered stretches follow at residues 1 to 69 and 114 to 159; these read MSGV…SNNN and SGFT…SPIT. A compositionally biased stretch (pro residues) spans 12 to 26; sequence SQPPPPPPHHPPSSP. Positions 114-125 are enriched in polar residues; it reads SGFTNIPSSPCQ. Residues 129-141 show a composition bias toward basic residues; sequence KGGRVNIKSKAKG. Over residues 142 to 159 the composition is skewed to polar residues; sequence NKSTPQTPISTNAGSPIT. The DNA-binding element occupies 167 to 232; it reads RYDSSLGLLT…PFKNRILWKG (66 aa). A coiled-coil region spans residues 245 to 286; it reads SVLQLQAEIENLALEEQALDNQIRQTEERLRDLSENEKNQKW. Residues 249 to 277 are leucine-zipper; the sequence is LQAEIENLALEEQALDNQIRQTEERLRDL. A retinoblastoma protein binding region spans residues 435 to 450; sequence DYWLLSNAEISMTDIW.

This sequence belongs to the E2F/DP family. Heterodimer with DP proteins. Interacts (via dimerization domain) preferentially with DPA, but also with DPB. Interacts with maize retinoblastoma-related protein RBR1. No interaction with E2FD. As to expression, highly expressed in the shoot apical meristem, emerging leaf primordia, and vascular tissues of young leaf primordia. Expressed in flowers, in epidermis and cortex of hypocotyls, and at lower levels in leaves.

The protein resides in the cytoplasm. The protein localises to the nucleus. Its function is as follows. Transcription activator that binds DNA cooperatively with DP proteins through the E2 recognition site, 5'-TTTC[CG]CGC-3' found in the promoter region of a number of genes whose products are involved in cell cycle regulation or in DNA replication. The binding of retinoblastoma-related proteins represses transactivation. Regulates gene expression both positively and negatively. Activates the expression of E2FB. Involved in the control of cell-cycle progression from G1 to S phase. Stimulates cell proliferation and delays differentiation. In Arabidopsis thaliana (Mouse-ear cress), this protein is Transcription factor E2FA (E2FA).